The chain runs to 211 residues: Ras-related protein rab-11.1 (211 aa).

Position 18 to 26 (18 to 26) interacts with GTP; that stretch reads GDSGVGKSN. The Effector region motif lies at 40-48; that stretch reads SKSTIGVEF. GTP-binding positions include 66–70, 124–127, and 154–156; these read DTAGQ, NKSD, and SAL. The segment at 187-211 is disordered; sequence GYGGGSGTIIPSPASDPPKKQCCIP. Residues Cys-208 and Cys-209 are each lipidated (S-geranylgeranyl cysteine).

The protein belongs to the small GTPase superfamily. Rab family. As to quaternary structure, interacts with rei-1 and rei-2. The GDP-form preferentially binds to rei-1 and rei-2. Expressed weakly in sperm, but more predominantly in oocytes. Expressed in the intestine.

The protein localises to the cytoplasmic vesicle. It localises to the secretory vesicle. The protein resides in the endosome. It is found in the cytoplasm. Its subcellular location is the cytoskeleton. The protein localises to the spindle. It localises to the microtubule organizing center. The protein resides in the spindle pole body. It is found in the centrosome. Its subcellular location is the apical cell membrane. The protein localises to the cytosol. It localises to the recycling endosome membrane. The protein resides in the golgi apparatus membrane. It is found in the cytoplasmic granule. The small GTPases Rab are key regulators of intracellular membrane trafficking, from the formation of transport vesicles to their fusion with membranes. Rabs cycle between an inactive GDP-bound form and an active GTP-bound form that is able to recruit to membranes different set of downstream effectors directly responsible for vesicle formation, movement, tethering and fusion. Involved in regulating the meiotic maturation of oocytes. Plays a role in egg shell formation, regulating exocytosis of chondroitin proteoglycans following fertilization. Controls cortical granule localization and targets them to the plasma membrane for exocytosis. Acts as a major regulator of membrane delivery during cytokinesis. Regulates the cytoskeleton by facilitating astral microtubule elongation and organization during metaphase to ensure proper spindle alignment and polarity in the first embryonic cell division. Maintains normal endoplasmic reticulum morphology during metaphase. Involved in vesicle formation and plasma membrane repair following exposure to pore forming toxins. Regulates endocytic recycling. May play a role in yolk receptor endocytosis in growing oocytes. Plays a role in the shedding of pathogen spores from intestinal cells via its involvement in spore fusion and endocytic trafficking. In Caenorhabditis elegans, this protein is Ras-related protein rab-11.1.